The following is a 61-amino-acid chain: Large ribosomal subunit protein uL30 (61 aa).

This sequence belongs to the universal ribosomal protein uL30 family. As to quaternary structure, part of the 50S ribosomal subunit.

In Dichelobacter nodosus (strain VCS1703A), this protein is Large ribosomal subunit protein uL30.